The following is a 69-amino-acid chain: Arabinogalactan protein 24 (69 aa).

The signal sequence occupies residues 1–25 (MMMMTKMFVQIAVVCLLATMAVVSA). Residues Pro-34, Pro-36, Pro-38, and Pro-40 each carry the 4-hydroxyproline modification. 4 O-linked (Ara...) hydroxyproline glycosylation sites follow: Pro-34, Pro-36, Pro-38, and Pro-40. A lipid anchor (GPI-anchor amidated serine) is attached at Ser-42. Residues 43-69 (SSTVVSATNMFTVLAIAAVALVVGSNH) constitute a propeptide, removed in mature form.

It belongs to the AG-peptide AGP family. Post-translationally, contains 4-hydroxyproline; hydroxylated on Pro-34, Pro-36, Pro-38 and Pro-40. In terms of processing, O-glycosylated on hydroxyprolines; noncontiguous hydroxylproline residues are glycosylated with arabinogalactan.

It is found in the cell membrane. Proteoglycan that seems to be implicated in diverse developmental roles such as differentiation, cell-cell recognition, embryogenesis and programmed cell death. The protein is Arabinogalactan protein 24 of Arabidopsis thaliana (Mouse-ear cress).